The primary structure comprises 510 residues: ATP synthase subunit alpha (510 aa).

169–176 (GDRQTGKT) provides a ligand contact to ATP.

The protein belongs to the ATPase alpha/beta chains family. F-type ATPases have 2 components, CF(1) - the catalytic core - and CF(0) - the membrane proton channel. CF(1) has five subunits: alpha(3), beta(3), gamma(1), delta(1), epsilon(1). CF(0) has three main subunits: a(1), b(2) and c(9-12). The alpha and beta chains form an alternating ring which encloses part of the gamma chain. CF(1) is attached to CF(0) by a central stalk formed by the gamma and epsilon chains, while a peripheral stalk is formed by the delta and b chains.

The protein resides in the cell inner membrane. It catalyses the reaction ATP + H2O + 4 H(+)(in) = ADP + phosphate + 5 H(+)(out). In terms of biological role, produces ATP from ADP in the presence of a proton gradient across the membrane. The alpha chain is a regulatory subunit. This Nitrobacter hamburgensis (strain DSM 10229 / NCIMB 13809 / X14) protein is ATP synthase subunit alpha.